Consider the following 412-residue polypeptide: CHRNA7-FAM7A fusion protein (412 aa).

A run of 5 helical transmembrane segments spans residues 144–164 (GLNLLIPCVLISALALLVFLL), 172–192 (ISLGITVLLSLTVFMLLVAEI), 205–225 (QYFASTMIIVGLSVVVTVIVL), 240–254 (WTRVILLNWCAWFLR), and 380–400 (LCLMAFSVFTIICTIGILMSA).

The protein belongs to the ligand-gated ion channel (TC 1.A.9) family. Expressed in hippocampus.

It localises to the membrane. In Homo sapiens (Human), this protein is CHRNA7-FAM7A fusion protein (CHRFAM7A).